The primary structure comprises 400 residues: Queuine tRNA-ribosyltransferase catalytic subunit 1 (400 aa).

The Proton acceptor role is filled by Asp103. Queuine-binding positions include 103-107 (DSGGF), Asp157, Gln200, and Gly227. The segment at 258–264 (GVGYAVD) is RNA binding. Catalysis depends on Asp277, which acts as the Nucleophile. The segment at 282–286 (TRTAR) is RNA binding; important for wobble base 34 recognition. Residues Cys315, Cys317, Cys320, and His345 each coordinate Zn(2+).

The protein belongs to the queuine tRNA-ribosyltransferase family. As to quaternary structure, heterodimer of a catalytic subunit qtrt1 and an accessory subunit qtrt2. It depends on Zn(2+) as a cofactor.

The protein resides in the cytoplasm. It localises to the mitochondrion outer membrane. The catalysed reaction is guanosine(34) in tRNA + queuine = queuosine(34) in tRNA + guanine. Catalytic subunit of the queuine tRNA-ribosyltransferase (TGT) that catalyzes the base-exchange of a guanine (G) residue with queuine (Q) at position 34 (anticodon wobble position) in tRNAs with GU(N) anticodons (tRNA-Asp, -Asn, -His and -Tyr), resulting in the hypermodified nucleoside queuosine (7-(((4,5-cis-dihydroxy-2-cyclopenten-1-yl)amino)methyl)-7-deazaguanosine). Catalysis occurs through a double-displacement mechanism. The nucleophile active site attacks the C1' of nucleotide 34 to detach the guanine base from the RNA, forming a covalent enzyme-RNA intermediate. The proton acceptor active site deprotonates the incoming queuine, allowing a nucleophilic attack on the C1' of the ribose to form the product. The sequence is that of Queuine tRNA-ribosyltransferase catalytic subunit 1 from Danio rerio (Zebrafish).